The primary structure comprises 481 residues: Phosphoglycerate kinase 1, chloroplastic (481 aa).

A chloroplast-targeting transit peptide spans 1 to 75 (MASAAASSAF…VRGKGSRGVV (75 aa)). At serine 81 the chain carries Phosphoserine. (2R)-3-phosphoglycerate contacts are provided by alanine 99, aspartate 100, asparagine 102, arginine 116, threonine 138, histidine 139, glycine 141, arginine 142, arginine 197, histidine 229, and arginine 230. Glycine 275 is an ADP binding site. Glycine 275 is a binding site for CDP. 2 residues coordinate AMP: lysine 277 and lysine 281. Lysine 281 is a binding site for ATP. Glycine 299 lines the ADP pocket. Residue glycine 299 coordinates CDP. AMP-binding residues include glycine 300 and glycine 372. Residues glycine 300 and glycine 372 each contribute to the ATP site. 2 residues coordinate CDP: glycine 397 and phenylalanine 402. ADP is bound at residue phenylalanine 402. Glutamate 403 provides a ligand contact to AMP. ATP-binding residues include glutamate 403, aspartate 434, and serine 435. Aspartate 434 is a binding site for Mg(2+).

It belongs to the phosphoglycerate kinase family. As to quaternary structure, monomer. Binds to FTSZ2-1 and FTSZ2-2. Mg(2+) serves as cofactor.

Its subcellular location is the plastid. It localises to the chloroplast. The catalysed reaction is (2R)-3-phosphoglycerate + ATP = (2R)-3-phospho-glyceroyl phosphate + ADP. It participates in carbohydrate biosynthesis; Calvin cycle. In terms of biological role, may trigger the phosphorylation of FTSZ2-1 and FTSZ2-2. The polypeptide is Phosphoglycerate kinase 1, chloroplastic (Arabidopsis thaliana (Mouse-ear cress)).